Reading from the N-terminus, the 240-residue chain is Pyridoxine 5'-phosphate synthase (240 aa).

Asn-6 provides a ligand contact to 3-amino-2-oxopropyl phosphate. 8–9 (DH) serves as a coordination point for 1-deoxy-D-xylulose 5-phosphate. A 3-amino-2-oxopropyl phosphate-binding site is contributed by Arg-17. Catalysis depends on His-42, which acts as the Proton acceptor. 2 residues coordinate 1-deoxy-D-xylulose 5-phosphate: Arg-44 and His-49. Glu-69 (proton acceptor) is an active-site residue. Position 99 (Thr-99) interacts with 1-deoxy-D-xylulose 5-phosphate. The active-site Proton donor is His-193. 3-amino-2-oxopropyl phosphate-binding positions include Gly-194 and 216–217 (GH).

This sequence belongs to the PNP synthase family. In terms of assembly, homooctamer; tetramer of dimers.

The protein resides in the cytoplasm. It catalyses the reaction 3-amino-2-oxopropyl phosphate + 1-deoxy-D-xylulose 5-phosphate = pyridoxine 5'-phosphate + phosphate + 2 H2O + H(+). The protein operates within cofactor biosynthesis; pyridoxine 5'-phosphate biosynthesis; pyridoxine 5'-phosphate from D-erythrose 4-phosphate: step 5/5. Its function is as follows. Catalyzes the complicated ring closure reaction between the two acyclic compounds 1-deoxy-D-xylulose-5-phosphate (DXP) and 3-amino-2-oxopropyl phosphate (1-amino-acetone-3-phosphate or AAP) to form pyridoxine 5'-phosphate (PNP) and inorganic phosphate. The sequence is that of Pyridoxine 5'-phosphate synthase from Hydrogenobaculum sp. (strain Y04AAS1).